The primary structure comprises 90 residues: Small ribosomal subunit protein bS20 (90 aa).

This sequence belongs to the bacterial ribosomal protein bS20 family.

In terms of biological role, binds directly to 16S ribosomal RNA. This Roseiflexus sp. (strain RS-1) protein is Small ribosomal subunit protein bS20.